Here is a 704-residue protein sequence, read N- to C-terminus: Seven transmembrane domain-containing serine/threonine-protein kinase 2 (704 aa).

Residues 1–5 (MPSKE) lie on the Extracellular side of the membrane. Residues 6 to 26 (FIIPLILLCFYSVNGFVAVIS) form a helical membrane-spanning segment. Residues 27–42 (SLVELFIHKASWNSIK) lie on the Cytoplasmic side of the membrane. The helical transmembrane segment at 43–63 (IFFYSLLILQCLCRCIIIGWG) threads the bilayer. Residues 64–76 (MIETVQGGEFYSN) are Extracellular-facing. The helical transmembrane segment at 77–97 (FPSLLFISYAGLVALQMIQFL) threads the bilayer. At 98-121 (PNDNQYLLLSEGKKNNHKVKVGTN) the chain is on the cytoplasmic side. The chain crosses the membrane as a helical span at residues 122–142 (ILIFFNLFMYFGMFLLFGIAE). The Extracellular portion of the chain corresponds to 143 to 185 (KQVGNSTSFNHHGNHNSTTSTSTDEIPLVSTEVGELYLFGDKD). Residues N147 and N158 are each glycosylated (N-linked (GlcNAc...) asparagine). A helical membrane pass occupies residues 186–206 (PIYIVLDCFYFVCLLLLLIFH). The Cytoplasmic segment spans residues 207–224 (SYVGWKTYKRNKDLFGIK). A helical transmembrane segment spans residues 225–245 (LNVIHLILLICIFIRSLLVII). Residues 246–265 (DPSSPNNSILHIDTESWLIY) are Extracellular-facing. A glycan (N-linked (GlcNAc...) asparagine) is linked at N251. A helical membrane pass occupies residues 266-286 (IYTISYYVVGEIIPGMLLIVI). Residues 287 to 704 (EFLLPYHKRK…WSIEKDSSSK (418 aa)) are Cytoplasmic-facing. The 366-residue stretch at 317 to 682 (IAIHELLGMG…SLGVKFHLAN (366 aa)) folds into the Protein kinase domain. Residues 323–331 (LGMGGSGAM) and K350 contribute to the ATP site. D506 acts as the Proton acceptor in catalysis.

It belongs to the protein kinase superfamily. Ser/Thr protein kinase family.

It localises to the membrane. It carries out the reaction L-seryl-[protein] + ATP = O-phospho-L-seryl-[protein] + ADP + H(+). The catalysed reaction is L-threonyl-[protein] + ATP = O-phospho-L-threonyl-[protein] + ADP + H(+). This is Seven transmembrane domain-containing serine/threonine-protein kinase 2 (7tmk2) from Dictyostelium discoideum (Social amoeba).